The following is a 235-amino-acid chain: 6-carboxyhexanoate--CoA ligase (235 aa).

The protein belongs to the BioW family. Homodimer. It depends on Mg(2+) as a cofactor.

It catalyses the reaction heptanedioate + ATP + CoA = 6-carboxyhexanoyl-CoA + AMP + diphosphate. Its pathway is metabolic intermediate metabolism; pimeloyl-CoA biosynthesis; pimeloyl-CoA from pimelate: step 1/1. Functionally, catalyzes the transformation of pimelate into pimeloyl-CoA with concomitant hydrolysis of ATP to AMP. The chain is 6-carboxyhexanoate--CoA ligase from Desulfovibrio desulfuricans (strain ATCC 27774 / DSM 6949 / MB).